Reading from the N-terminus, the 644-residue chain is Probable potassium transport system protein Kup (644 aa).

The next 12 membrane-spanning stretches (helical) occupy residues 10–30 (GGATLPLMAMAALGVVFGDIG), 56–76 (ILSLIFWTLVLVVSVKYAWVI), 106–126 (WWILSIGLLGAALFYGDGVIT), 143–163 (PAWKPLVIPLALGVIIGLFMV), 175–195 (FGPSMLVWFLLLFGSGLTWIV), 212–232 (FFGIHGIGGLVILGAVVLAVT), 252–272 (AWYFLVLPALALNYLGQGALL), 282–302 (PFFMLFPAWATIPMVVISGIA), 343–363 (IYLPLLNWLLMVAVIVVILWF), 371–391 (FAYGTAVTGTMLMTTILVFFV), 403–423 (AGLFCGFFVLLDGVFFGANLL), and 425–445 (FVEGGWFPLAIGLAVFTTMST).

The protein belongs to the HAK/KUP transporter (TC 2.A.72) family.

The protein resides in the cell inner membrane. It catalyses the reaction K(+)(in) + H(+)(in) = K(+)(out) + H(+)(out). In terms of biological role, transport of potassium into the cell. Likely operates as a K(+):H(+) symporter. In Acidithiobacillus ferrooxidans (strain ATCC 23270 / DSM 14882 / CIP 104768 / NCIMB 8455) (Ferrobacillus ferrooxidans (strain ATCC 23270)), this protein is Probable potassium transport system protein Kup.